Consider the following 313-residue polypeptide: Porphobilinogen deaminase (313 aa).

At cysteine 242 the chain carries S-(dipyrrolylmethanemethyl)cysteine.

Belongs to the HMBS family. Monomer. The cofactor is dipyrromethane.

The catalysed reaction is 4 porphobilinogen + H2O = hydroxymethylbilane + 4 NH4(+). It participates in porphyrin-containing compound metabolism; protoporphyrin-IX biosynthesis; coproporphyrinogen-III from 5-aminolevulinate: step 2/4. Functionally, tetrapolymerization of the monopyrrole PBG into the hydroxymethylbilane pre-uroporphyrinogen in several discrete steps. The chain is Porphobilinogen deaminase from Escherichia coli (strain K12 / MC4100 / BW2952).